The following is a 623-amino-acid chain: GATA zinc finger domain-containing protein 6 (623 aa).

3 disordered regions span residues 137–156 (IISP…GNNF), 167–197 (INNN…TAST), and 245–289 (PTTT…TAST). Residues 167–179 (INNNSNNNNNNNN) show a composition bias toward low complexity. Polar residues predominate over residues 185–197 (KQQTSKGSATAST). The segment at 320–345 (CHSCGETQTSQWRRGPDGCKSLCNAC) adopts a GATA-type zinc-finger fold. The tract at residues 398 to 509 (IQQQQQKDDH…SINHNDKLIN (112 aa)) is disordered. Residues 410–482 (LSRPSSFSSQ…TSPTISSESL (73 aa)) are compositionally biased toward low complexity. Residues 483-502 (NFSSATNTPTNLSPNLQSIN) are compositionally biased toward polar residues.

In Dictyostelium discoideum (Social amoeba), this protein is GATA zinc finger domain-containing protein 6 (gtaF).